The chain runs to 1937 residues: Myosin-8 (1937 aa).

One can recognise a Myosin N-terminal SH3-like domain in the interval 35 to 84 (DAKTSVFVAEPKESYVKSVIQSKDGGKVTVKTESGATLTVKEDQVFPMNP). Phosphothreonine occurs at positions 66 and 71. The Myosin motor domain occupies 88–781 (DKIEDMAMMT…LLGLLEEMRD (694 aa)). Residue Lys-132 is modified to N6,N6,N6-trimethyllysine. Position 181-188 (181-188 (GESGAGKT)) interacts with ATP. Tyr-389 carries the phosphotyrosine modification. A Phosphothreonine modification is found at Thr-419. A Phosphotyrosine modification is found at Tyr-424. At Ser-625 the chain carries Phosphoserine. The interval 658-680 (LNKLMTNLRSTHPHFVRCIIPNE) is actin-binding. Position 756 is a pros-methylhistidine (His-756). The actin-binding stretch occupies residues 760–774 (KFGHTKVFFKAGLLG). The IQ domain maps to 781–813 (DEKLAQIITRTQAVCRGYLMRVEYQKMLLRRES). Residues 842-1937 (LLKSAETEKE…REVHTKISAE (1096 aa)) adopt a coiled-coil conformation. Residues Ser-1091 and Ser-1095 each carry the phosphoserine modification. The segment at 1125 to 1171 (IEAERASRAKAEKQRSDLSRELEEISERLEEAGGATSAQVEMNKKRE) is disordered. Positions 1127–1155 (AERASRAKAEKQRSDLSRELEEISERLEE) are enriched in basic and acidic residues. 2 positions are modified to phosphoserine: Ser-1161 and Ser-1236. Position 1254 is a phosphothreonine (Thr-1254). Ser-1260 is subject to Phosphoserine. Phosphothreonine is present on Thr-1285. Phosphoserine occurs at positions 1291, 1302, and 1305. Tyr-1463 is modified (phosphotyrosine). At Thr-1466 the chain carries Phosphothreonine. A Phosphotyrosine modification is found at Tyr-1491. Ser-1494 bears the Phosphoserine mark. Thr-1500 is modified (phosphothreonine). Ser-1513 carries the post-translational modification Phosphoserine. Thr-1516 carries the phosphothreonine modification. Residues Ser-1553, Ser-1573, Ser-1602, Ser-1713, and Ser-1725 each carry the phosphoserine modification. Thr-1729 carries the post-translational modification Phosphothreonine. Position 1738 is a phosphoserine (Ser-1738).

The protein belongs to the TRAFAC class myosin-kinesin ATPase superfamily. Myosin family. In terms of assembly, muscle myosin is a hexameric protein that consists of 2 heavy chain subunits (MHC), 2 alkali light chain subunits (MLC) and 2 regulatory light chain subunits (MLC-2).

It localises to the cytoplasm. The protein resides in the myofibril. Muscle contraction. This is Myosin-8 (Myh8) from Mus musculus (Mouse).